The primary structure comprises 468 residues: MGTQEGWCLLLCLALSGAAETKPHPAERQWRAADVVLDCFLAKDGGHRAALASSEDRARASLVLKQVPVLDDGSLEDFTDFQGGTLAQDDPPIIFEASVDLVQIPQAEALLHADCSGKEVTCEISRYFLQMKGTTVETEAWFMANVQVSGGGPSISMVMKTPRDAKNEALWHPTLNLPLSPQGTVRTAVEFQVMTQTQSLSFLLGSSASLDCGFSMTPGLDLISVEWRLQHKGRGQLVYSWTTGQGQAVRKGATLEPEQLGMARNASLTLPSLTIQDEGTYICQITTSLYRAQQIIQLNIQASPKVRLSLANEALLPTLICNIAGYYPLDVVVTWTREELGGSPAQVSGASFSSLRQSVAGTYSISSSLTAEPGSAGATYTCQVMHISLEEPLGASTQVVPPERRTALGVIFASSLFLLALLFLGLQRRQAPTRVGLLQAERWKTTSCADTQSSHLHEDRTACVSQPS.

An N-terminal signal peptide occupies residues 1-18 (MGTQEGWCLLLCLALSGA). Residues 19–405 (AETKPHPAER…STQVVPPERR (387 aa)) lie on the Lumenal side of the membrane. In terms of domain architecture, Ig-like V-type spans 181–297 (PQGTVRTAVE…SLYRAQQIIQ (117 aa)). Cystine bridges form between C212/C283 and C321/C382. The N-linked (GlcNAc...) asparagine glycan is linked to N265. The 91-residue stretch at 304-394 (PKVRLSLANE…MHISLEEPLG (91 aa)) folds into the Ig-like C1-type domain. A helical transmembrane segment spans residues 406–426 (TALGVIFASSLFLLALLFLGL). Residues 427 to 468 (QRRQAPTRVGLLQAERWKTTSCADTQSSHLHEDRTACVSQPS) lie on the Cytoplasmic side of the membrane.

Interacts with peptide-free HLA-A*02-B2M complexes or those loaded with low affinity peptides, likely facilitating peptide exchange onto higher affinity peptides. Interacts with MR1 in a ligand-independent way; this interaction may stabilize MR1 pool and facilitate ligand loading and dissociation.

The protein localises to the cell membrane. Its subcellular location is the endoplasmic reticulum membrane. It localises to the microsome membrane. It is found in the golgi apparatus membrane. In terms of biological role, component of the antigen processing and presentation pathway, which binds to MHC class I coupled with beta2-microglobulin/B2M. Association between TAPBPR and MHC class I occurs in the absence of a functional peptide-loading complex (PLC). Expression seems to slow down and down-regulate MHC class I surface expression. The chain is Tapasin-related protein (TAPBPL) from Pongo abelii (Sumatran orangutan).